A 335-amino-acid polypeptide reads, in one-letter code: Ketol-acid reductoisomerase (NADP(+)) 2 (335 aa).

A KARI N-terminal Rossmann domain is found at 1-180 (MKTYYEQDAN…GCTRAGVIET (180 aa)). NADP(+) is bound by residues 24 to 27 (YGSQ), R47, S51, and 81 to 84 (DEQQ). H106 is an active-site residue. Position 132 (G132) interacts with NADP(+). Positions 181-326 (TFQEETETDL…EELREMMSWI (146 aa)) constitute a KARI C-terminal knotted domain. Mg(2+)-binding residues include D189, E193, E225, and E229. Residue S250 participates in substrate binding.

It belongs to the ketol-acid reductoisomerase family. Mg(2+) serves as cofactor.

It catalyses the reaction (2R)-2,3-dihydroxy-3-methylbutanoate + NADP(+) = (2S)-2-acetolactate + NADPH + H(+). The enzyme catalyses (2R,3R)-2,3-dihydroxy-3-methylpentanoate + NADP(+) = (S)-2-ethyl-2-hydroxy-3-oxobutanoate + NADPH + H(+). Its pathway is amino-acid biosynthesis; L-isoleucine biosynthesis; L-isoleucine from 2-oxobutanoate: step 2/4. It functions in the pathway amino-acid biosynthesis; L-valine biosynthesis; L-valine from pyruvate: step 2/4. Functionally, involved in the biosynthesis of branched-chain amino acids (BCAA). Catalyzes an alkyl-migration followed by a ketol-acid reduction of (S)-2-acetolactate (S2AL) to yield (R)-2,3-dihydroxy-isovalerate. In the isomerase reaction, S2AL is rearranged via a Mg-dependent methyl migration to produce 3-hydroxy-3-methyl-2-ketobutyrate (HMKB). In the reductase reaction, this 2-ketoacid undergoes a metal-dependent reduction by NADPH to yield (R)-2,3-dihydroxy-isovalerate. In Bacillus thuringiensis subsp. konkukian (strain 97-27), this protein is Ketol-acid reductoisomerase (NADP(+)) 2.